A 122-amino-acid polypeptide reads, in one-letter code: Large ribosomal subunit protein uL14 (122 aa).

The protein belongs to the universal ribosomal protein uL14 family. Part of the 50S ribosomal subunit. Forms a cluster with proteins L3 and L19. In the 70S ribosome, L14 and L19 interact and together make contacts with the 16S rRNA in bridges B5 and B8.

Functionally, binds to 23S rRNA. Forms part of two intersubunit bridges in the 70S ribosome. This Methylobacterium radiotolerans (strain ATCC 27329 / DSM 1819 / JCM 2831 / NBRC 15690 / NCIMB 10815 / 0-1) protein is Large ribosomal subunit protein uL14.